Consider the following 649-residue polypeptide: Protein translocase subunit SecA 2 (649 aa).

ATP is bound by residues glutamine 105, 123–127 (GEGKT), and aspartate 535.

The protein belongs to the SecA family. Monomer and homodimer. Part of the essential Sec protein translocation apparatus which comprises SecA, SecYEG and auxiliary proteins SecDF-YajC and YidC.

It is found in the cell inner membrane. The protein localises to the cytoplasm. It carries out the reaction ATP + H2O + cellular proteinSide 1 = ADP + phosphate + cellular proteinSide 2.. Its function is as follows. Part of the Sec protein translocase complex. Interacts with the SecYEG preprotein conducting channel. Has a central role in coupling the hydrolysis of ATP to the transfer of proteins into and across the cell membrane, serving both as a receptor for the preprotein-SecB complex and as an ATP-driven molecular motor driving the stepwise translocation of polypeptide chains across the membrane. This chain is Protein translocase subunit SecA 2, found in Magnetococcus marinus (strain ATCC BAA-1437 / JCM 17883 / MC-1).